The chain runs to 4998 residues: SCO-spondin (4998 aa).

The N-terminal stretch at 1–17 (MLPLALLFGMLWTQANG) is a signal peptide. The EMI domain maps to 18–102 (HWCEQIETVH…ACCPGWGGAH (85 aa)). The VWFD 1 domain maps to 72 to 241 (GLCAIYKPPE…KLPGSEPGCL (170 aa)). 2 disulfides stabilise this stretch: cysteine 74–cysteine 202 and cysteine 103–cysteine 240. 2 N-linked (GlcNAc...) asparagine glycosylation sites follow: asparagine 88 and asparagine 130. Residues 349–404 (CPGGQLYSDCVSSCPPSCSAVAQGEEGSCGKECVSGCECPTGLFWDGALCVPAAHC) enclose the TIL 1 domain. The VWFC 1 domain occupies 404–496 (CPCYHRRQRY…HGACDTGSCL (93 aa)). Residues 442-615 (AECAVGGDGH…FQVSGDGRCP (174 aa)) form the VWFD 2 domain. Disulfide bonds link cysteine 444/cysteine 577 and cysteine 468/cysteine 614. Asparagine 534 and asparagine 698 each carry an N-linked (GlcNAc...) asparagine glycan. A TIL 2 domain is found at 706–759 (CPGGQVYQECAPVCGHHCGEPEDCKELGICVAGCNCPPGLLWDLEGQCVPPSMC). N-linked (GlcNAc...) asparagine glycans are attached at residues asparagine 771, asparagine 790, asparagine 824, and asparagine 866. Positions 892–1062 (GWCQASGAPH…HSWRLNPLCP (171 aa)) constitute a VWFD 3 domain. 3 disulfides stabilise this stretch: cysteine 894–cysteine 1026, cysteine 916–cysteine 1061, and cysteine 937–cysteine 944. Residues 1153 to 1209 (CEGGQVYEPCGSTCPPTCHDHHSELRWHCQVITCVEGCFCPEGTLLHGGACMKLAAC) enclose the TIL 3 domain. Residue asparagine 1230 is glycosylated (N-linked (GlcNAc...) asparagine). LDL-receptor class A domains are found at residues 1253–1290 (GCAEGETLCRENGHCVPLEWLCDNQDDCGDGSDEEGCA), 1293–1328 (VCGEGQMSCQSGHCLPLSLICDGQDDCGDGTDEQGC), 1329–1365 (LCPHGSLACADGRCLPPALLCNGHPDCLDAADEESCL), and 1369–1407 (SCISGEVSCVDGTCVRTIQLCDGVWDCPDGADEGPSHCS). 12 cysteine pairs are disulfide-bonded: cysteine 1254/cysteine 1267, cysteine 1261/cysteine 1280, cysteine 1274/cysteine 1289, cysteine 1294/cysteine 1306, cysteine 1301/cysteine 1319, cysteine 1313/cysteine 1328, cysteine 1330/cysteine 1342, cysteine 1337/cysteine 1355, cysteine 1349/cysteine 1364, cysteine 1370/cysteine 1382, cysteine 1377/cysteine 1395, and cysteine 1389/cysteine 1406. A disordered region spans residues 1406–1440 (CSLPSLPTPPGGIGQNPSTSSLDTAPSPVGSTSPA). Over residues 1420–1440 (QNPSTSSLDTAPSPVGSTSPA) the composition is skewed to polar residues. 2 consecutive LDL-receptor class A domains span residues 1442–1478 (PCSLLEFQCNSGECTPRGWRCDQEEDCTDGSDELDCG) and 1480–1519 (PCMLYQVPCAHSPHCVSPGQLCDGVTQCPDGSDEDPDVCE). Disulfide bonds link cysteine 1443-cysteine 1455, cysteine 1450-cysteine 1468, cysteine 1462-cysteine 1477, cysteine 1481-cysteine 1494, cysteine 1488-cysteine 1507, and cysteine 1501-cysteine 1518. A glycan (N-linked (GlcNAc...) asparagine) is linked at asparagine 1528. The LDL-receptor class A 7 domain occupies 1533-1571 (PCPEFSCPDGTCIDFLLVCDGNPDCELADETEPSLDEQG). 9 disulfide bridges follow: cysteine 1534–cysteine 1544, cysteine 1539–cysteine 1557, cysteine 1551–cysteine 1572, cysteine 1584–cysteine 1620, cysteine 1588–cysteine 1625, cysteine 1599–cysteine 1610, cysteine 1640–cysteine 1680, cysteine 1644–cysteine 1685, and cysteine 1654–cysteine 1664. TSP type-1 domains are found at residues 1572–1626 (CGAW…EACP) and 1628–1686 (DGEW…EGCL). Asparagine 1598 carries N-linked (GlcNAc...) asparagine glycosylation. Asparagine 1687 carries an N-linked (GlcNAc...) asparagine glycan. One can recognise a TIL 4 domain in the interval 1692 to 1746 (GELVFRTCAPCPLTCDDISGQAACPPDRPCSSPGCWCPDGKVLNTEGQCVRPRQC). EGF-like domains are found at residues 1702–1741 (CPLTCDDISGQAACPPDRPCSSPGCWCPDGKVLNTEGQCV) and 1742–1768 (RPRQCPCLVDGAHYWPGQRIKMDCQLC). In terms of domain architecture, TSP type-1 3 spans 1771–1827 (DCGWSSWSPWAECLGPCSSQSLQWSFRSPNNPRLSGHGRQCRGIHRKARRCQTEACE). 3 cysteine pairs are disulfide-bonded: cysteine 1772-cysteine 1811, cysteine 1783-cysteine 1787, and cysteine 1821-cysteine 1826. One can recognise a VWFC 2 domain in the interval 1827–1887 (EGCEQWGLMY…GMGESCCHCA (61 aa)). Residues asparagine 1892 and asparagine 1989 are each glycosylated (N-linked (GlcNAc...) asparagine). Positions 1929–2085 (CYSPLGLAGL…IFLWVELLGL (157 aa)) constitute an F5/8 type C domain. In terms of domain architecture, LDL-receptor class A 8 spans 2091–2127 (LCPGSRHRCASGECAPKGGPCDGAVDCDDGSDEEGCG). 3 disulfides stabilise this stretch: cysteine 2092–cysteine 2104, cysteine 2099–cysteine 2117, and cysteine 2111–cysteine 2126. The segment at 2119-2209 (DGSDEEGCGS…TFPPGAKSLH (91 aa)) is disordered. A compositionally biased stretch (polar residues) spans 2130-2144 (HASTTSRTPALSPTQ). The span at 2148–2158 (FPREVSEDLRQ) shows a compositional bias: basic and acidic residues. 2 stretches are compositionally biased toward polar residues: residues 2164-2173 (TSHSPPSSGE) and 2190-2201 (QPMQTLSATSTF). 2 LDL-receptor class A domains span residues 2242 to 2278 (PCGPGQVPCDVLGCVEQEQLCDGREDCLDGSDEQHCA) and 2299 to 2335 (LCSPSQLRCGSGECLPFEHRCDLQVNCQDGSDEDNCV). Cystine bridges form between cysteine 2243–cysteine 2255, cysteine 2250–cysteine 2268, cysteine 2262–cysteine 2277, cysteine 2300–cysteine 2312, cysteine 2307–cysteine 2325, cysteine 2319–cysteine 2334, cysteine 2337–cysteine 2373, cysteine 2348–cysteine 2352, cysteine 2383–cysteine 2388, cysteine 2403–cysteine 2440, cysteine 2407–cysteine 2445, and cysteine 2418–cysteine 2430. TSP type-1 domains follow at residues 2336 to 2389 (DCVL…QACP) and 2391 to 2446 (AGAW…QLCP). The 44-residue stretch at 2468 to 2511 (VPPCPPSCLDPEANRSCSGHCMEGCRCPPGLLLQDSHCLPLSEC) folds into the TIL 5 domain. Asparagine 2481 and asparagine 2530 each carry an N-linked (GlcNAc...) asparagine glycan. TSP type-1 domains follow at residues 2551–2605 (SCGW…TDCG), 2609–2664 (PGWT…PVCP), and 2666–2719 (PSAW…HPCT). 9 cysteine pairs are disulfide-bonded: cysteine 2552–cysteine 2590, cysteine 2563–cysteine 2567, cysteine 2600–cysteine 2604, cysteine 2620–cysteine 2658, cysteine 2624–cysteine 2663, cysteine 2640–cysteine 2648, cysteine 2678–cysteine 2713, cysteine 2682–cysteine 2718, and cysteine 2693–cysteine 2703. 2 N-linked (GlcNAc...) asparagine glycosylation sites follow: asparagine 2772 and asparagine 2802. TSP type-1 domains are found at residues 2820 to 2875 (ACGW…RPCR) and 2876 to 2919 (GPGA…QPCA). 3 cysteine pairs are disulfide-bonded: cysteine 2821–cysteine 2859, cysteine 2832–cysteine 2836, and cysteine 2869–cysteine 2874. Residues asparagine 2897, asparagine 2952, asparagine 2999, and asparagine 3009 are each glycosylated (N-linked (GlcNAc...) asparagine). Positions 2926–2978 (CPEDQQWLDCAQGPASCAHLSIPGEANQTCHPGCYCLSGMLLLNNVCVPVQDC) constitute a TIL 6 domain. TSP type-1 domains follow at residues 3019–3086 (QPAW…PGCN) and 3088–3143 (AGGW…QPCP). 6 disulfides stabilise this stretch: cysteine 3031–cysteine 3080, cysteine 3035–cysteine 3085, cysteine 3046–cysteine 3070, cysteine 3100–cysteine 3137, cysteine 3104–cysteine 3142, and cysteine 3115–cysteine 3127. The N-linked (GlcNAc...) asparagine glycan is linked to asparagine 3146. In terms of domain architecture, TIL 7 spans 3151–3201 (EGAEYSPCGPPCPRSCDDLVHCVWRCQPGCYCPLGKVLSADGAICVKPSYC). Asparagine 3235 carries N-linked (GlcNAc...) asparagine glycosylation. TSP type-1 domains lie at 3244 to 3306 (SGDW…TACP) and 3308 to 3363 (DGAW…TLCT). Disulfide bonds link cysteine 3256-cysteine 3299, cysteine 3260-cysteine 3305, cysteine 3271-cysteine 3283, cysteine 3320-cysteine 3355, cysteine 3323-cysteine 3362, and cysteine 3333-cysteine 3345. Asparagine 3301 carries an N-linked (GlcNAc...) asparagine glycan. N-linked (GlcNAc...) asparagine glycosylation is present at asparagine 3357. Residues 3365–3421 (CGGGQDLLPCGQPCPHSCQDLSLGSTCQPGSAGCQSGCGCPPGQLSQDGLCVFPVDC) form the TIL 8 domain. Asparagine 3435 and asparagine 3462 each carry an N-linked (GlcNAc...) asparagine glycan. A TSP type-1 15 domain is found at 3481–3529 (PGIWSSWGPWEKCSVSCGGGEQLRSRQCARPPCPGLAQQSRICHIHVCR). Intrachain disulfides connect cysteine 3493/cysteine 3523, cysteine 3497/cysteine 3528, and cysteine 3508/cysteine 3513. An N-linked (GlcNAc...) asparagine glycan is attached at asparagine 3638. TSP type-1 domains are found at residues 3657 to 3713 (HGSF…PECP), 3727 to 3779 (AGGW…PSCA), 3793 to 3849 (NCFW…RACP), and 3851 to 3906 (PGGW…MPCE). 3 cysteine pairs are disulfide-bonded: cysteine 3669–cysteine 3707, cysteine 3673–cysteine 3712, and cysteine 3685–cysteine 3697. An N-linked (GlcNAc...) asparagine glycan is attached at asparagine 3761. 6 disulfides stabilise this stretch: cysteine 3794/cysteine 3830, cysteine 3805/cysteine 3809, cysteine 3843/cysteine 3848, cysteine 3863/cysteine 3900, cysteine 3867/cysteine 3905, and cysteine 3878/cysteine 3890. The region spanning 3909–3964 (CPAGMEMVSCANHCPYSCSDLQEGGMCQEDQACQLGCRCSEGFLEQDGGCVPVGHC) is the TIL 9 domain. N-linked (GlcNAc...) asparagine glycosylation is present at asparagine 3986. TSP type-1 domains lie at 4006-4059 (HCAW…VPCP), 4100-4155 (PRGW…QLCL), 4157-4213 (KLER…GPCQ), and 4215-4269 (DCTW…GNCS). 12 disulfides stabilise this stretch: cysteine 4007-cysteine 4043, cysteine 4018-cysteine 4022, cysteine 4053-cysteine 4058, cysteine 4112-cysteine 4149, cysteine 4116-cysteine 4154, cysteine 4127-cysteine 4139, cysteine 4169-cysteine 4207, cysteine 4173-cysteine 4212, cysteine 4184-cysteine 4195, cysteine 4216-cysteine 4253, cysteine 4227-cysteine 4229, and cysteine 4263-cysteine 4268. Residue asparagine 4196 is glycosylated (N-linked (GlcNAc...) asparagine). N-linked (GlcNAc...) asparagine glycosylation is present at asparagine 4267. The 56-residue stretch at 4273–4328 (CPPPFEFQSCGSPCAGLCATHLNHRLCQDLPPCQPGCYCPKGLLEQAGSCILPEQC) folds into the TIL 10 domain. N-linked (GlcNAc...) asparagine glycans are attached at residues asparagine 4408 and asparagine 4463. Positions 4465–4516 (TCQWGPWGPWSPCQMPCSGGFKLRWRVARDTSAGECPGPWAQTESCNMGSCP) constitute a TSP type-1 24 domain. 3 cysteine pairs are disulfide-bonded: cysteine 4466/cysteine 4500, cysteine 4477/cysteine 4481, and cysteine 4510/cysteine 4515. The TIL 11 domain occupies 4530 to 4576 (DCANQCPRSCADLWDGVQCLQGPCSPGCRCPPGQLVQDGHCVPISSC). Residues asparagine 4584, asparagine 4601, and asparagine 4606 are each glycosylated (N-linked (GlcNAc...) asparagine). The 54-residue stretch at 4616–4669 (CPVLGPWSAWSECSAVCGKGTMVRHRSCEEHPDREPCQALDLQQWQECNLQACP) folds into the TSP type-1 25 domain. 3 disulfides stabilise this stretch: cysteine 4628/cysteine 4663, cysteine 4632/cysteine 4668, and cysteine 4643/cysteine 4652. A TIL 12 domain is found at 4671–4725 (CPPGQVLSTCATMCPSLCSHLWPGTICVREPCQLGCGCPGGQLLYNGTCIPPEAC). N-linked (GlcNAc...) asparagine glycosylation is found at asparagine 4716, asparagine 4756, asparagine 4799, and asparagine 4806. In terms of domain architecture, TIL 13 spans 4777-4835 (CAPGEIWQHGKLGPCEKTCPEMNMTQAWSNCTEAQAPGCVCQLGYFRSQTGLCVPEDHC). Positions 4835-4893 (CECWHHGSPHLPGSEWQEACESCRCLHGKSVCIRHCPELSCAQGEVIMQEPGSCCPICQ) constitute a VWFC 3 domain. Disulfide bonds link cysteine 4892-cysteine 4952, cysteine 4918-cysteine 4969, cysteine 4928-cysteine 4985, and cysteine 4932-cysteine 4987. In terms of domain architecture, CTCK spans 4892-4991 (CQQDTLKEEP…IHSCQCSACQ (100 aa)). N-linked (GlcNAc...) asparagine glycosylation is present at asparagine 4912.

This sequence belongs to the thrombospondin family. In terms of tissue distribution, subcommissural organ.

It localises to the secreted. Its subcellular location is the extracellular space. Functionally, involved in the modulation of neuronal aggregation. May be involved in developmental events during the formation of the central nervous system. The polypeptide is SCO-spondin (Mus musculus (Mouse)).